A 213-amino-acid chain; its full sequence is Nucleoside triphosphate pyrophosphatase (213 aa).

Catalysis depends on Asp79, which acts as the Proton acceptor.

Belongs to the Maf family. It depends on a divalent metal cation as a cofactor.

The protein resides in the cytoplasm. It catalyses the reaction a ribonucleoside 5'-triphosphate + H2O = a ribonucleoside 5'-phosphate + diphosphate + H(+). The enzyme catalyses a 2'-deoxyribonucleoside 5'-triphosphate + H2O = a 2'-deoxyribonucleoside 5'-phosphate + diphosphate + H(+). Nucleoside triphosphate pyrophosphatase. May have a dual role in cell division arrest and in preventing the incorporation of modified nucleotides into cellular nucleic acids. The polypeptide is Nucleoside triphosphate pyrophosphatase (Mycobacterium leprae (strain Br4923)).